Here is a 703-residue protein sequence, read N- to C-terminus: Polyribonucleotide nucleotidyltransferase (703 aa).

Residues Asp485 and Asp491 each coordinate Mg(2+). Positions 552–611 (PRIYTLKIDQDKIRDVIGKGGAMIRSITEASDTNIEIEDDGTIKIFATERAKADIAISKI) constitute a KH domain. Residues 621–689 (GKTYEGKVTR…RQNRVRLSIK (69 aa)) form the S1 motif domain.

It belongs to the polyribonucleotide nucleotidyltransferase family. Component of the RNA degradosome, which is a multiprotein complex involved in RNA processing and mRNA degradation. Requires Mg(2+) as cofactor.

The protein resides in the cytoplasm. The catalysed reaction is RNA(n+1) + phosphate = RNA(n) + a ribonucleoside 5'-diphosphate. Involved in mRNA degradation. Catalyzes the phosphorolysis of single-stranded polyribonucleotides processively in the 3'- to 5'-direction. This Pseudoalteromonas atlantica (strain T6c / ATCC BAA-1087) protein is Polyribonucleotide nucleotidyltransferase.